A 515-amino-acid chain; its full sequence is MGRKALISVSDKTGVVEFAKELEKLGFQIISSSGTARVLKENGIDVTEVSDITGFPEIMGGRVKTLHPKIHGGLLAVRDNPEYMKQLEEQGIEPIDIVAINLYPFEQTVRKGADLDEIIENIDIGGPAMVRASAKNHKFVTIIVDPEDYGSVISELKEKGETSLETRRKLALKAFRHTAFYDSVISSVLNEKFGIDEKFPEEFSVPFRKKDTLRYGENPHQEAAVYISPVEYKGLSVAESEVLHGKEMSYNNFLDVEAAVNLVKEFDETACVIVKHNNPCGVAISHTPEKAYREALSRDPKSAFGGIVAFNRSVDIDTAKALTEIFLEVIVAPDFDKDAFDYLTEKKKNLRLVKIKNFDKKAEGPDYRRISGGILVQDRDTQLYNELKVVTDREPTDKEMEDLLFAWKVVKHVKSNSVVIAKNKATVGIGPGQTSRVDSLETAVKKAEEFNLDTEGSVLASEAFFPFRDSVDQAAKYGIKAIIQPGGSIRDNEVIQAANEHGIAMVFTGMRHFKH.

Residues 1-144 enclose the MGS-like domain; the sequence is MGRKALISVS…KNHKFVTIIV (144 aa).

This sequence belongs to the PurH family.

It catalyses the reaction (6R)-10-formyltetrahydrofolate + 5-amino-1-(5-phospho-beta-D-ribosyl)imidazole-4-carboxamide = 5-formamido-1-(5-phospho-D-ribosyl)imidazole-4-carboxamide + (6S)-5,6,7,8-tetrahydrofolate. The enzyme catalyses IMP + H2O = 5-formamido-1-(5-phospho-D-ribosyl)imidazole-4-carboxamide. It participates in purine metabolism; IMP biosynthesis via de novo pathway; 5-formamido-1-(5-phospho-D-ribosyl)imidazole-4-carboxamide from 5-amino-1-(5-phospho-D-ribosyl)imidazole-4-carboxamide (10-formyl THF route): step 1/1. Its pathway is purine metabolism; IMP biosynthesis via de novo pathway; IMP from 5-formamido-1-(5-phospho-D-ribosyl)imidazole-4-carboxamide: step 1/1. The sequence is that of Bifunctional purine biosynthesis protein PurH from Persephonella marina (strain DSM 14350 / EX-H1).